The chain runs to 427 residues: Enolase (427 aa).

Q163 lines the (2R)-2-phosphoglycerate pocket. Catalysis depends on E205, which acts as the Proton donor. Mg(2+)-binding residues include D242, E285, and D312. (2R)-2-phosphoglycerate contacts are provided by K337, R366, S367, and K388. The Proton acceptor role is filled by K337.

The protein belongs to the enolase family. The cofactor is Mg(2+).

The protein localises to the cytoplasm. The protein resides in the secreted. It localises to the cell surface. The catalysed reaction is (2R)-2-phosphoglycerate = phosphoenolpyruvate + H2O. Its pathway is carbohydrate degradation; glycolysis; pyruvate from D-glyceraldehyde 3-phosphate: step 4/5. Functionally, catalyzes the reversible conversion of 2-phosphoglycerate (2-PG) into phosphoenolpyruvate (PEP). It is essential for the degradation of carbohydrates via glycolysis. The protein is Enolase of Burkholderia lata (strain ATCC 17760 / DSM 23089 / LMG 22485 / NCIMB 9086 / R18194 / 383).